Consider the following 438-residue polypeptide: Serine hydroxymethyltransferase (438 aa).

Residues leucine 119 and glycine 123 to leucine 125 each bind (6S)-5,6,7,8-tetrahydrofolate. Residue lysine 228 is modified to N6-(pyridoxal phosphate)lysine. Residue serine 370 to phenylalanine 372 coordinates (6S)-5,6,7,8-tetrahydrofolate.

Belongs to the SHMT family. Homodimer. It depends on pyridoxal 5'-phosphate as a cofactor.

The protein localises to the cytoplasm. It catalyses the reaction (6R)-5,10-methylene-5,6,7,8-tetrahydrofolate + glycine + H2O = (6S)-5,6,7,8-tetrahydrofolate + L-serine. Its pathway is one-carbon metabolism; tetrahydrofolate interconversion. It participates in amino-acid biosynthesis; glycine biosynthesis; glycine from L-serine: step 1/1. In terms of biological role, catalyzes the reversible interconversion of serine and glycine with tetrahydrofolate (THF) serving as the one-carbon carrier. This reaction serves as the major source of one-carbon groups required for the biosynthesis of purines, thymidylate, methionine, and other important biomolecules. Also exhibits THF-independent aldolase activity toward beta-hydroxyamino acids, producing glycine and aldehydes, via a retro-aldol mechanism. The sequence is that of Serine hydroxymethyltransferase from Chlorobium chlorochromatii (strain CaD3).